The primary structure comprises 178 residues: Endoribonuclease YbeY (178 aa).

Residues His-118, His-122, and His-128 each contribute to the Zn(2+) site. Residues 158 to 178 (ADRQSEKDRRLLDKSRYFDEP) form a disordered region.

It belongs to the endoribonuclease YbeY family. Zn(2+) is required as a cofactor.

The protein resides in the cytoplasm. In terms of biological role, single strand-specific metallo-endoribonuclease involved in late-stage 70S ribosome quality control and in maturation of the 3' terminus of the 16S rRNA. In Mycolicibacterium smegmatis (strain ATCC 700084 / mc(2)155) (Mycobacterium smegmatis), this protein is Endoribonuclease YbeY.